The primary structure comprises 385 residues: S-adenosylmethionine synthase (385 aa).

ATP is bound at residue histidine 15. Aspartate 17 contributes to the Mg(2+) binding site. Glutamate 43 is a binding site for K(+). L-methionine is bound by residues glutamate 56 and glutamine 99. Positions glutamine 99–arginine 109 are flexible loop. Residues aspartate 164 to lysine 166, arginine 230 to phenylalanine 231, aspartate 239, arginine 245 to lysine 246, and lysine 266 contribute to the ATP site. L-methionine is bound at residue aspartate 239. Residue lysine 270 coordinates L-methionine.

The protein belongs to the AdoMet synthase family. Homotetramer; dimer of dimers. Requires Mg(2+) as cofactor. The cofactor is K(+).

The protein resides in the cytoplasm. It catalyses the reaction L-methionine + ATP + H2O = S-adenosyl-L-methionine + phosphate + diphosphate. It functions in the pathway amino-acid biosynthesis; S-adenosyl-L-methionine biosynthesis; S-adenosyl-L-methionine from L-methionine: step 1/1. Functionally, catalyzes the formation of S-adenosylmethionine (AdoMet) from methionine and ATP. The overall synthetic reaction is composed of two sequential steps, AdoMet formation and the subsequent tripolyphosphate hydrolysis which occurs prior to release of AdoMet from the enzyme. This is S-adenosylmethionine synthase from Alkalilimnicola ehrlichii (strain ATCC BAA-1101 / DSM 17681 / MLHE-1).